The chain runs to 142 residues: Hemoglobin subunit alpha-2 (142 aa).

One can recognise a Globin domain in the interval 2-142 (VLSPADKTNV…VSTVLTSKYR (141 aa)). Histidine 59 serves as a coordination point for O2. Position 88 (histidine 88) interacts with heme b.

The protein belongs to the globin family. As to quaternary structure, heterotetramer of two alpha chains and two beta chains. In terms of tissue distribution, red blood cells.

Functionally, involved in oxygen transport from the lung to the various peripheral tissues. Hemopressin acts as an antagonist peptide of the cannabinoid receptor CNR1. Hemopressin-binding efficiently blocks cannabinoid receptor CNR1 and subsequent signaling. This chain is Hemoglobin subunit alpha-2 (HBA2), found in Hylobates lar (Lar gibbon).